Here is an 801-residue protein sequence, read N- to C-terminus: Interleukin-4 receptor subunit alpha (801 aa).

Residues M1 to G25 form the signal peptide. At I26–R232 the chain is on the extracellular side. Residues C34 and C44 are joined by a disulfide bond. N71 carries N-linked (GlcNAc...) asparagine glycosylation. C74 and C86 are oxidised to a cystine. The region spanning A125–N223 is the Fibronectin type-III domain. Residues N128, N134, and N162 are each glycosylated (N-linked (GlcNAc...) asparagine). S164 carries the post-translational modification Phosphoserine. Residue N176 is glycosylated (N-linked (GlcNAc...) asparagine). Positions W212–S216 match the WSXWS motif motif. The chain crosses the membrane as a helical span at residues L233–I256. At K257–S801 the chain is on the cytoplasmic side. The short motif at W262–A270 is the Box 1 motif element. The tract at residues V424–G476 is disordered. Residues Q426 to S444 are compositionally biased toward low complexity. The tract at residues E439–S549 is required for IRS1 activation and IL4-induced cell growth. Positions P454–Q465 are enriched in polar residues. Y492 bears the Phosphotyrosine mark. The tract at residues R493 to A515 is disordered. The tract at residues S549–L644 is required for IL4-induced gene expression. 3 positions are modified to phosphotyrosine: Y566, Y594, and Y622. An ITIM motif motif is present at residues I698–L703. The interval R767–S801 is disordered.

The protein belongs to the type I cytokine receptor family. Type 4 subfamily. The functional IL4 receptor is formed by initial binding of IL4 to IL4R. Subsequent recruitment to the complex of the common gamma chain, in immune cells, creates a type I receptor and, in non-immune cells, of IL13RA1 forms a type II receptor. IL4R can also interact with the IL13/IL13RA1 complex to form a similar type II receptor. Interacts with PIK3C3. Interacts with the SH2-containing phosphatases, PTPN6/SHIP1, PTPN11/SHIP2 and INPP5D/SHIP. Interacts with JAK1 through a Box 1-containing region; inhibited by SOCS5. Interacts with SOCS5; inhibits IL4 signaling. Interacts with JAK3. Interacts with CLM1. Interacts with IL13RA2. In terms of processing, on IL4 binding, phosphorylated on C-terminal tyrosine residues. As to expression, isoform 2 is expressed in kidney, spleen, lung and liver.

The protein localises to the cell membrane. It localises to the secreted. Its function is as follows. Receptor for both interleukin 4 and interleukin 13. Couples to the JAK1/2/3-STAT6 pathway. The IL4 response is involved in promoting Th2 differentiation. The IL4/IL13 responses are involved in regulating IgE production and, chemokine and mucus production at sites of allergic inflammation. In certain cell types, can signal through activation of insulin receptor substrates, IRS1/IRS2. Isoform 2 (soluble form) inhibits IL4-induced spleen cell proliferation. The sequence is that of Interleukin-4 receptor subunit alpha (Il4r) from Rattus norvegicus (Rat).